Here is a 215-residue protein sequence, read N- to C-terminus: Cytochrome b6 (215 aa).

A helical transmembrane segment spans residues 32–52 (IFYCLGGITLTCFIVQVATGF). Cys-35 is a heme c binding site. Positions 86 and 100 each coordinate heme b. 3 consecutive transmembrane segments (helical) span residues 90 to 110 (ASMM…TGGF), 116 to 136 (LTWV…VTGY), and 186 to 206 (AHTF…FVMI). Residues His-187 and His-202 each contribute to the heme b site.

The protein belongs to the cytochrome b family. PetB subfamily. The 4 large subunits of the cytochrome b6-f complex are cytochrome b6, subunit IV (17 kDa polypeptide, PetD), cytochrome f and the Rieske protein, while the 4 small subunits are PetG, PetL, PetM and PetN. The complex functions as a dimer. Heme b is required as a cofactor. It depends on heme c as a cofactor.

The protein localises to the plastid. The protein resides in the chloroplast thylakoid membrane. Functionally, component of the cytochrome b6-f complex, which mediates electron transfer between photosystem II (PSII) and photosystem I (PSI), cyclic electron flow around PSI, and state transitions. In Emiliania huxleyi (Coccolithophore), this protein is Cytochrome b6.